The sequence spans 295 residues: ATP synthase gamma chain (295 aa).

Belongs to the ATPase gamma chain family. F-type ATPases have 2 components, CF(1) - the catalytic core - and CF(0) - the membrane proton channel. CF(1) has five subunits: alpha(3), beta(3), gamma(1), delta(1), epsilon(1). CF(0) has three main subunits: a, b and c.

Its subcellular location is the cell membrane. Produces ATP from ADP in the presence of a proton gradient across the membrane. The gamma chain is believed to be important in regulating ATPase activity and the flow of protons through the CF(0) complex. In Caldanaerobacter subterraneus subsp. tengcongensis (strain DSM 15242 / JCM 11007 / NBRC 100824 / MB4) (Thermoanaerobacter tengcongensis), this protein is ATP synthase gamma chain.